A 138-amino-acid polypeptide reads, in one-letter code: Superoxide dismutase [Mn] (138 aa).

Residues histidine 1, histidine 49, aspartate 133, and histidine 137 each coordinate Mn(2+).

Belongs to the iron/manganese superoxide dismutase family. Requires Mn(2+) as cofactor.

It catalyses the reaction 2 superoxide + 2 H(+) = H2O2 + O2. Destroys superoxide anion radicals which are normally produced within the cells and which are toxic to biological systems. The protein is Superoxide dismutase [Mn] (sodA) of Mycobacterium malmoense.